A 726-amino-acid polypeptide reads, in one-letter code: Biotin--protein ligase (726 aa).

Positions 28–98 (EVKDQVSNKQ…SDRGGGPVEH (71 aa)) are disordered. Positions 43–75 (PKPEPSLEIKPEQDGMEHVGRDDPKALGEEPKQ) are enriched in basic and acidic residues. Residues Ser-147 and Ser-299 each carry the phosphoserine modification. The 190-residue stretch at 463–652 (KQLGKVILFA…VLEKLIKEFQ (190 aa)) folds into the BPL/LPL catalytic domain.

Belongs to the biotin--protein ligase family. As to quaternary structure, monomer. As to expression, widely expressed. Mostly expressed in muscle, placenta and to a lower extent in the brain, kidney, pancreas, liver and lung.

The protein localises to the cytoplasm. It is found in the mitochondrion. The catalysed reaction is apo-[methylmalonyl-CoA:pyruvate carboxytransferase] + biotin + ATP = holo-[methylmalonyl-CoA:pyruvate carboxytransferase] + AMP + diphosphate + H(+). The enzyme catalyses apo-[propionyl-CoA:carbon-dioxide ligase (ADP-forming)] + biotin + ATP = holo-[propionyl-CoA:carbon-dioxide ligase (ADP-forming)] + AMP + diphosphate + H(+). It carries out the reaction apo-[3-methylcrotonoyl-CoA:carbon-dioxide ligase (ADP-forming)] + biotin + ATP = holo-[3-methylcrotonoyl-CoA:carbon-dioxide ligase (ADP-forming)] + AMP + diphosphate + H(+). It catalyses the reaction biotin + L-lysyl-[protein] + ATP = N(6)-biotinyl-L-lysyl-[protein] + AMP + diphosphate + H(+). In terms of biological role, biotin--protein ligase catalyzing the biotinylation of the 4 biotin-dependent carboxylases acetyl-CoA-carboxylase, pyruvate carboxylase, propionyl-CoA carboxylase, and methylcrotonyl-CoA carboxylase. The protein is Biotin--protein ligase of Homo sapiens (Human).